Reading from the N-terminus, the 257-residue chain is Mediator of RNA polymerase II transcription subunit 7 (257 aa).

Residues 33-74 (EWQRQQNDEEIETKQEEADDKDEKDNEKQNETQDTVPPGELR) are disordered. Residues 44-63 (ETKQEEADDKDEKDNEKQNE) show a composition bias toward basic and acidic residues.

It belongs to the Mediator complex subunit 7 family. In terms of assembly, component of the Mediator complex.

The protein localises to the nucleus. Functionally, component of the Mediator complex, a coactivator involved in the regulated transcription of nearly all RNA polymerase II-dependent genes. Mediator functions as a bridge to convey information from gene-specific regulatory proteins to the basal RNA polymerase II transcription machinery. Mediator is recruited to promoters by direct interactions with regulatory proteins and serves as a scaffold for the assembly of a functional preinitiation complex with RNA polymerase II and the general transcription factors. The protein is Mediator of RNA polymerase II transcription subunit 7 (MED7) of Scheffersomyces stipitis (strain ATCC 58785 / CBS 6054 / NBRC 10063 / NRRL Y-11545) (Yeast).